The chain runs to 640 residues: G protein-coupled receptor kinase 1 (640 aa).

An N-terminal region spans residues 1 to 201 (MEIENIVANT…LEKRPVDKHT (201 aa)). The 136-residue stretch at 52-187 (YAFVVEKQPI…IQTMYFHRFL (136 aa)) folds into the RGS domain. The region spanning 202 to 469 (FRLYRVLGKG…AEEIRAHPFF (268 aa)) is the Protein kinase domain. ATP contacts are provided by residues 208–216 (LGKGGFGEV) and K231. The Proton acceptor role is filled by D327. An AGC-kinase C-terminal domain is found at 479 to 544 (EPVPWKKMEA…GCVSIPWQSE (66 aa)). The disordered stretch occupies residues 610–640 (GVDQQQPSTSAKPAAVRSSRAASASGRTSMI). A compositionally biased stretch (low complexity) spans 619-640 (SAKPAAVRSSRAASASGRTSMI).

The protein belongs to the protein kinase superfamily. AGC Ser/Thr protein kinase family. GPRK subfamily.

The enzyme catalyses [G-protein-coupled receptor] + ATP = [G-protein-coupled receptor]-phosphate + ADP + H(+). In terms of biological role, specifically phosphorylates the activated forms of G protein-coupled receptors. The protein is G protein-coupled receptor kinase 1 (grk-1) of Caenorhabditis briggsae.